A 621-amino-acid chain; its full sequence is MBT domain-containing protein 1 (621 aa).

Basic and acidic residues predominate over residues 1-21; that stretch reads MEKTKDPADRSSRSERKRRDS. Residues 1 to 55 form a disordered region; sequence MEKTKDPADRSSRSERKRRDSFGMFDGYDSCSEDTSSSSSSDESEEEVAPLPSSL. The segment covering 29-41 has biased composition (low complexity); the sequence is DSCSEDTSSSSSS. An FCS-type zinc finger spans residues 68 to 103; it reads PDGKSGMATCEMCGMVGVRDAFYSKTKRFCSVSCSR. Zn(2+)-binding residues include Cys77, Cys80, Cys97, and Cys101. 4 MBT repeats span residues 164 to 268, 276 to 373, 374 to 479, and 487 to 583; these read FSWG…LVPP, TNWK…IGHR, FKRT…LTPP, and FKWF…LQPP. The segment at 581–621 is disordered; sequence QPPAPQSNKDGQSNVSKQKKKSKSQPYKGHKKNFRKPGNRP. A compositionally biased stretch (basic residues) spans 597 to 621; it reads KQKKKSKSQPYKGHKKNFRKPGNRP.

As to quaternary structure, monomer. Component of the NuA4 histone acetyltransferase complex.

The protein resides in the nucleus. Its subcellular location is the chromosome. Its function is as follows. Chromatin reader component of the NuA4 histone acetyltransferase complex, a multiprotein complex involved in transcriptional activation of select genes principally by acetylation of nucleosomal histones H4 and H2A. The NuA4 complex plays a direct role in repair of DNA double-strand breaks (DSBs) by promoting homologous recombination (HR). MBTD1 specifically recognizes and binds monomethylated and dimethylated 'Lys-20' on histone H4 (H4K20me1 and H4K20me2, respectively). In the NuA4 complex, MBTD1 promotes recruitment of the complex to H4K20me marks by competing with TP53BP1 for binding to H4K20me. Following recruitment to H4K20me at DNA breaks, the NuA4 complex catalyzes acetylation of 'Lys-15' on histone H2A (H2AK15), blocking the ubiquitination mark required for TP53BP1 localization at DNA breaks, thereby promoting homologous recombination (HR). This is MBT domain-containing protein 1 from Xenopus laevis (African clawed frog).